A 74-amino-acid chain; its full sequence is VLIIAVLFLTACQLTTAVTSSRGEQKHRALRSTDKKFKVALLCSPPGSYCFGPAACCSNFCSTLSDVCQESWSG.

Positions 1–17 (VLIIAVLFLTACQLTTA) are cleaved as a signal peptide. The propeptide occupies 18–38 (VTSSRGEQKHRALRSTDKKFK). 3 disulfides stabilise this stretch: Cys-43–Cys-57, Cys-50–Cys-61, and Cys-56–Cys-68. At Ser-73 the chain carries Serine amide.

The protein belongs to the conotoxin O1 superfamily. In terms of tissue distribution, expressed by the venom duct.

Its subcellular location is the secreted. This is Conotoxin AbVIA from Conus abbreviatus (Abbreviated cone).